The following is a 322-amino-acid chain: 4-hydroxythreonine-4-phosphate dehydrogenase (322 aa).

T132 serves as a coordination point for substrate. 3 residues coordinate a divalent metal cation: H160, H205, and H260. The substrate site is built by K268, N277, and R286.

It belongs to the PdxA family. As to quaternary structure, homodimer. It depends on Zn(2+) as a cofactor. Mg(2+) is required as a cofactor. The cofactor is Co(2+).

Its subcellular location is the cytoplasm. The catalysed reaction is 4-(phosphooxy)-L-threonine + NAD(+) = 3-amino-2-oxopropyl phosphate + CO2 + NADH. It participates in cofactor biosynthesis; pyridoxine 5'-phosphate biosynthesis; pyridoxine 5'-phosphate from D-erythrose 4-phosphate: step 4/5. Catalyzes the NAD(P)-dependent oxidation of 4-(phosphooxy)-L-threonine (HTP) into 2-amino-3-oxo-4-(phosphooxy)butyric acid which spontaneously decarboxylates to form 3-amino-2-oxopropyl phosphate (AHAP). In Xanthomonas campestris pv. campestris (strain B100), this protein is 4-hydroxythreonine-4-phosphate dehydrogenase.